Consider the following 121-residue polypeptide: Small ribosomal subunit protein uS13 (121 aa).

A disordered region spans residues 94–121; that stretch reads GLPVRGQKTRNNAHTVKGKPKAIAGKKK. Basic residues predominate over residues 109 to 121; that stretch reads VKGKPKAIAGKKK.

This sequence belongs to the universal ribosomal protein uS13 family. As to quaternary structure, part of the 30S ribosomal subunit. Forms a loose heterodimer with protein S19. Forms two bridges to the 50S subunit in the 70S ribosome.

Its function is as follows. Located at the top of the head of the 30S subunit, it contacts several helices of the 16S rRNA. In the 70S ribosome it contacts the 23S rRNA (bridge B1a) and protein L5 of the 50S subunit (bridge B1b), connecting the 2 subunits; these bridges are implicated in subunit movement. Contacts the tRNAs in the A and P-sites. In Onion yellows phytoplasma (strain OY-M), this protein is Small ribosomal subunit protein uS13.